We begin with the raw amino-acid sequence, 284 residues long: Nucleotide-binding protein NGK_0463 (284 aa).

Position 8–15 (8–15 (GLSGSGKS)) interacts with ATP. 58–61 (DVRS) is a binding site for GTP.

It belongs to the RapZ-like family.

Functionally, displays ATPase and GTPase activities. This chain is Nucleotide-binding protein NGK_0463, found in Neisseria gonorrhoeae (strain NCCP11945).